Reading from the N-terminus, the 88-residue chain is Small ribosomal subunit protein uS15 (88 aa).

Belongs to the universal ribosomal protein uS15 family. In terms of assembly, part of the 30S ribosomal subunit. Forms a bridge to the 50S subunit in the 70S ribosome, contacting the 23S rRNA.

Its function is as follows. One of the primary rRNA binding proteins, it binds directly to 16S rRNA where it helps nucleate assembly of the platform of the 30S subunit by binding and bridging several RNA helices of the 16S rRNA. In terms of biological role, forms an intersubunit bridge (bridge B4) with the 23S rRNA of the 50S subunit in the ribosome. This is Small ribosomal subunit protein uS15 from Opitutus terrae (strain DSM 11246 / JCM 15787 / PB90-1).